The sequence spans 229 residues: 2-C-methyl-D-erythritol 4-phosphate cytidylyltransferase (229 aa).

The protein belongs to the IspD/TarI cytidylyltransferase family. IspD subfamily.

It carries out the reaction 2-C-methyl-D-erythritol 4-phosphate + CTP + H(+) = 4-CDP-2-C-methyl-D-erythritol + diphosphate. The protein operates within isoprenoid biosynthesis; isopentenyl diphosphate biosynthesis via DXP pathway; isopentenyl diphosphate from 1-deoxy-D-xylulose 5-phosphate: step 2/6. Its function is as follows. Catalyzes the formation of 4-diphosphocytidyl-2-C-methyl-D-erythritol from CTP and 2-C-methyl-D-erythritol 4-phosphate (MEP). This chain is 2-C-methyl-D-erythritol 4-phosphate cytidylyltransferase, found in Clostridium botulinum (strain Loch Maree / Type A3).